The primary structure comprises 149 residues: 5-hydroxytryptamine receptor 1E (149 aa).

Over 1-6 the chain is Extracellular; the sequence is HQPANY. Residues 7-31 form a helical membrane-spanning segment; it reads LICSLAVTDLLVAVLVMPLSIMYIV. Residues 32–39 lie on the Cytoplasmic side of the membrane; it reads MDSWRLGY. A helical transmembrane segment spans residues 40-65; the sequence is FICEVWLSVDMTCCTCSILHLCVIAL. Cys-42 and Cys-120 are oxidised to a cystine. 2 residues coordinate serotonin: Asp-49 and Cys-53. Positions 66-68 match the DRY motif; important for ligand-induced conformation changes motif; that stretch reads DRY. The Extracellular segment spans residues 66 to 85; the sequence is DRYWAITNAIEYARKRTAKR. A helical transmembrane segment spans residues 86 to 104; sequence AGLMILTVWTISIFISMPP. Over 105–149 the chain is Cytoplasmic; the sequence is LFWRSHRQLSPPPSQCAIQHDHVIYTIYSTLGAFYIPLTLILILY.

It belongs to the G-protein coupled receptor 1 family.

The protein localises to the cell membrane. Its function is as follows. G-protein coupled receptor for 5-hydroxytryptamine (serotonin). Also functions as a receptor for various alkaloids and psychoactive substances. Ligand binding causes a conformation change that triggers signaling via guanine nucleotide-binding proteins (G proteins) and modulates the activity of downstream effectors, such as adenylate cyclase. HTR1E is coupled to G(i)/G(o) G alpha proteins and mediates inhibitory neurotransmission by inhibiting adenylate cyclase activity. In Sus scrofa (Pig), this protein is 5-hydroxytryptamine receptor 1E (HTR1E).